The primary structure comprises 589 residues: Serine/threonine-protein kinase STE7 homolog (589 aa).

Positions 1 to 18 (MTRTTRIDTQEATKHKDL) are enriched in basic and acidic residues. 2 disordered regions span residues 1 to 162 (MTRT…DPDN) and 185 to 233 (RQHY…ASSQ). Over residues 24-33 (PLSLSSNPNP) the composition is skewed to low complexity. A compositionally biased stretch (polar residues) spans 57 to 69 (VKSTSGSLRSSDM). Over residues 92 to 121 (PTASSSATSTPTSNITGSSSASSIQFAQKS) the composition is skewed to low complexity. Polar residues-rich tracts occupy residues 127–136 (IVSQTLSRPS) and 144–162 (SGYSSLNVNQSNRNVDPDN). A compositionally biased stretch (basic residues) spans 185-203 (RQHYQNSHHHLPTTNRKRQ). The segment covering 206 to 220 (ISSISPTKSSAASSS) has biased composition (low complexity). Residues 221–233 (LEPQIQSLPASSQ) show a composition bias toward polar residues. Residues 249–565 (LLTLKQLGSG…QLLEDKEHFF (317 aa)) form the Protein kinase domain. ATP contacts are provided by residues 255-263 (LGSGNSGSV) and Lys-278. Asp-374 serves as the catalytic Proton acceptor. Ser-402 is subject to Phosphoserine. Phosphothreonine is present on Thr-408. Residues 473 to 499 (IAAERNGQNSPSRSRKNKQKGNGYNSY) form a disordered region.

This sequence belongs to the protein kinase superfamily. STE Ser/Thr protein kinase family. MAP kinase kinase subfamily.

It carries out the reaction L-seryl-[protein] + ATP = O-phospho-L-seryl-[protein] + ADP + H(+). The enzyme catalyses L-threonyl-[protein] + ATP = O-phospho-L-threonyl-[protein] + ADP + H(+). It catalyses the reaction L-tyrosyl-[protein] + ATP = O-phospho-L-tyrosyl-[protein] + ADP + H(+). This Candida albicans (strain SC5314 / ATCC MYA-2876) (Yeast) protein is Serine/threonine-protein kinase STE7 homolog (HST7).